Here is a 156-residue protein sequence, read N- to C-terminus: Photosystem I reaction center subunit XI (156 aa).

Transmembrane regions (helical) follow at residues 75–95 and 128–148; these read GGLL…SLYA and FFIG…ALYF.

The protein belongs to the PsaL family.

Its subcellular location is the cellular thylakoid membrane. The polypeptide is Photosystem I reaction center subunit XI (Crocosphaera subtropica (strain ATCC 51142 / BH68) (Cyanothece sp. (strain ATCC 51142))).